The following is a 598-amino-acid chain: Autophagy-related protein 22-1 (598 aa).

The disordered stretch occupies residues 1-20 (MEDGGAGLRAPRYPAEDTSP). A helical membrane pass occupies residues 28–48 (GFFCYGLAAEVFAVCAVGSFL). N74 and N80 each carry an N-linked (GlcNAc...) asparagine glycan. 3 consecutive transmembrane segments (helical) span residues 111–131 (SFAM…LVSV), 159–179 (FLLV…ICVV), and 182–202 (GCSF…HPVV). A disordered region spans residues 207 to 238 (DHPTASSSIPLQPISPQRSSRKSEESLHQVNR). Over residues 212-224 (SSSIPLQPISPQR) the composition is skewed to low complexity. Positions 227-238 (RKSEESLHQVNR) are enriched in basic and acidic residues. The chain crosses the membrane as a helical span at residues 263-283 (VGIGYMAAVSVQVICILILYI). N285 carries an N-linked (GlcNAc...) asparagine glycan. 7 helical membrane passes run 297–317 (TVLF…VMWL), 363–383 (VLLF…ISAT), 400–420 (ALLS…WPII), 431–451 (IIVC…LGFL), 465–485 (WYEI…LSSY), 489–509 (FYGL…FAIT), and 534–554 (AFGF…MVDV). Residues 575-598 (HEDFESFEGSSDGHEAEGLMRDHD) form a disordered region. Basic and acidic residues predominate over residues 585–598 (SDGHEAEGLMRDHD).

This sequence belongs to the ATG22 family.

Its subcellular location is the vacuole membrane. Vacuolar effluxer which mediate the efflux of amino acids resulting from autophagic degradation. The release of autophagic amino acids allows the maintenance of protein synthesis and viability during nitrogen starvation. The sequence is that of Autophagy-related protein 22-1 (atg22-1) from Sclerotinia sclerotiorum (strain ATCC 18683 / 1980 / Ss-1) (White mold).